Reading from the N-terminus, the 308-residue chain is Bifunctional protein FolD (308 aa).

Gly170 to Gly172 contributes to the NADP(+) binding site.

It belongs to the tetrahydrofolate dehydrogenase/cyclohydrolase family. In terms of assembly, homodimer.

It catalyses the reaction (6R)-5,10-methylene-5,6,7,8-tetrahydrofolate + NADP(+) = (6R)-5,10-methenyltetrahydrofolate + NADPH. The enzyme catalyses (6R)-5,10-methenyltetrahydrofolate + H2O = (6R)-10-formyltetrahydrofolate + H(+). The protein operates within one-carbon metabolism; tetrahydrofolate interconversion. Catalyzes the oxidation of 5,10-methylenetetrahydrofolate to 5,10-methenyltetrahydrofolate and then the hydrolysis of 5,10-methenyltetrahydrofolate to 10-formyltetrahydrofolate. This is Bifunctional protein FolD from Pyrobaculum calidifontis (strain DSM 21063 / JCM 11548 / VA1).